Reading from the N-terminus, the 155-residue chain is SsrA-binding protein (155 aa).

It belongs to the SmpB family.

The protein resides in the cytoplasm. Functionally, required for rescue of stalled ribosomes mediated by trans-translation. Binds to transfer-messenger RNA (tmRNA), required for stable association of tmRNA with ribosomes. tmRNA and SmpB together mimic tRNA shape, replacing the anticodon stem-loop with SmpB. tmRNA is encoded by the ssrA gene; the 2 termini fold to resemble tRNA(Ala) and it encodes a 'tag peptide', a short internal open reading frame. During trans-translation Ala-aminoacylated tmRNA acts like a tRNA, entering the A-site of stalled ribosomes, displacing the stalled mRNA. The ribosome then switches to translate the ORF on the tmRNA; the nascent peptide is terminated with the 'tag peptide' encoded by the tmRNA and targeted for degradation. The ribosome is freed to recommence translation, which seems to be the essential function of trans-translation. This chain is SsrA-binding protein, found in Ligilactobacillus salivarius (strain UCC118) (Lactobacillus salivarius).